A 241-amino-acid polypeptide reads, in one-letter code: CRISPR-associated endoribonuclease Cas6 2 (241 aa).

Tyr-28 acts as the Proton acceptor in catalysis. Residue His-40 is the Proton donor of the active site.

This sequence belongs to the CRISPR-associated protein Cas6/Cse3/CasE family.

In terms of biological role, CRISPR (clustered regularly interspaced short palindromic repeat) is an adaptive immune system that provides protection against mobile genetic elements (viruses, transposable elements and conjugative plasmids). CRISPR clusters contain sequences complementary to antecedent mobile elements and target invading nucleic acids. CRISPR clusters are transcribed and processed into CRISPR RNA (crRNA). This protein processes pre-crRNA into individual crRNA units. The sequence is that of CRISPR-associated endoribonuclease Cas6 2 (cas6b) from Methanocaldococcus jannaschii (strain ATCC 43067 / DSM 2661 / JAL-1 / JCM 10045 / NBRC 100440) (Methanococcus jannaschii).